Consider the following 173-residue polypeptide: Membrane-bound hydrogenase subunit beta (173 aa).

Belongs to the complex I 30 kDa subunit family. As to quaternary structure, the membrane-bound hydrogenase complex is composed of MbhK and MbhL, and may also contain MbhJ. Ni(2+) is required as a cofactor.

The protein resides in the cell membrane. It catalyses the reaction H2 + 2 oxidized [2Fe-2S]-[ferredoxin] = 2 reduced [2Fe-2S]-[ferredoxin] + 2 H(+). Inhibited by 0.1 mM Cu(2+). Its function is as follows. Beta subunit of a hydrogen-evolving hydrogenase that utilizes protons both as a substrate for hydrogen production and proton translocation. Acts by coupling the redox reaction via ferredoxin and iron-sulfur (Fe-S) clusters to proton translocation across the membrane thereby conserving the redox energy in a proton gradient. This is Membrane-bound hydrogenase subunit beta from Pyrococcus furiosus (strain ATCC 43587 / DSM 3638 / JCM 8422 / Vc1).